The following is a 429-amino-acid chain: Bifunctional protein GlmU (429 aa).

A pyrophosphorylase region spans residues 1-223 (MKTSILILAA…EDEFMGINDK (223 aa)). UDP-N-acetyl-alpha-D-glucosamine contacts are provided by residues 8–11 (LAAG), lysine 22, and 81–82 (GT). Aspartate 102 contacts Mg(2+). The UDP-N-acetyl-alpha-D-glucosamine site is built by glycine 135, glutamate 149, asparagine 164, and asparagine 221. Asparagine 221 lines the Mg(2+) pocket. Positions 224–244 (FELSIAENFMQEKIKKYWMQQ) are linker. The N-acetyltransferase stretch occupies residues 245 to 429 (GVIFHLPQST…KDYYYKKFQK (185 aa)). UDP-N-acetyl-alpha-D-glucosamine is bound by residues arginine 308 and lysine 325. Histidine 336 (proton acceptor) is an active-site residue. 2 residues coordinate UDP-N-acetyl-alpha-D-glucosamine: tyrosine 339 and asparagine 350. Acetyl-CoA is bound by residues 359 to 360 (NY), serine 378, alanine 396, and arginine 413.

This sequence in the N-terminal section; belongs to the N-acetylglucosamine-1-phosphate uridyltransferase family. The protein in the C-terminal section; belongs to the transferase hexapeptide repeat family. As to quaternary structure, homotrimer. Mg(2+) is required as a cofactor.

Its subcellular location is the cytoplasm. The enzyme catalyses alpha-D-glucosamine 1-phosphate + acetyl-CoA = N-acetyl-alpha-D-glucosamine 1-phosphate + CoA + H(+). The catalysed reaction is N-acetyl-alpha-D-glucosamine 1-phosphate + UTP + H(+) = UDP-N-acetyl-alpha-D-glucosamine + diphosphate. The protein operates within nucleotide-sugar biosynthesis; UDP-N-acetyl-alpha-D-glucosamine biosynthesis; N-acetyl-alpha-D-glucosamine 1-phosphate from alpha-D-glucosamine 6-phosphate (route II): step 2/2. Its pathway is nucleotide-sugar biosynthesis; UDP-N-acetyl-alpha-D-glucosamine biosynthesis; UDP-N-acetyl-alpha-D-glucosamine from N-acetyl-alpha-D-glucosamine 1-phosphate: step 1/1. It participates in bacterial outer membrane biogenesis; LPS lipid A biosynthesis. Functionally, catalyzes the last two sequential reactions in the de novo biosynthetic pathway for UDP-N-acetylglucosamine (UDP-GlcNAc). The C-terminal domain catalyzes the transfer of acetyl group from acetyl coenzyme A to glucosamine-1-phosphate (GlcN-1-P) to produce N-acetylglucosamine-1-phosphate (GlcNAc-1-P), which is converted into UDP-GlcNAc by the transfer of uridine 5-monophosphate (from uridine 5-triphosphate), a reaction catalyzed by the N-terminal domain. This is Bifunctional protein GlmU from Campylobacter jejuni subsp. jejuni serotype O:6 (strain 81116 / NCTC 11828).